The following is a 120-amino-acid chain: cAMP-responsive element-binding protein-like 2 (120 aa).

A disordered region spans residues 1–24 (MDDSKVVGGKVKKPGKRGRKPAKI). Basic residues predominate over residues 10–21 (KVKKPGKRGRKP). The region spanning 23-86 (KIDLKAKLER…MAMDQGKIPS (64 aa)) is the bZIP domain. Positions 29-60 (KLERSRQSARECRARKKLRYQYLEELVSSRER) are basic motif. The tract at residues 62–69 (ICALREEL) is leucine-zipper. The disordered stretch occupies residues 93 to 120 (TGEEQSKSQQNSSRHMKAGKTDANSNSW).

Belongs to the bZIP family. ATF subfamily. In terms of assembly, interacts with CREB1; regulates CREB1 phosphorylation, stability and transcriptional activity. Interacts with immediate-early (IE) protein BICP22 of bovine herpesvirus-1 (BHV-1). Phosphorylated by AMPK.

The protein localises to the nucleus. In terms of biological role, probable regulator of CREB1 transcriptional activity which is involved in adipose cells differentiation. May also play a regulatory role in the cell cycle. The polypeptide is cAMP-responsive element-binding protein-like 2 (CREBL2) (Bos taurus (Bovine)).